Reading from the N-terminus, the 200-residue chain is Pyridoxal 5'-phosphate synthase subunit PdxT (200 aa).

50–52 (GES) is an L-glutamine binding site. The active-site Nucleophile is cysteine 82. L-glutamine contacts are provided by residues arginine 110 and 138-139 (IR). Catalysis depends on charge relay system residues histidine 174 and glutamate 176.

It belongs to the glutaminase PdxT/SNO family. As to quaternary structure, in the presence of PdxS, forms a dodecamer of heterodimers. Only shows activity in the heterodimer.

It carries out the reaction aldehydo-D-ribose 5-phosphate + D-glyceraldehyde 3-phosphate + L-glutamine = pyridoxal 5'-phosphate + L-glutamate + phosphate + 3 H2O + H(+). The enzyme catalyses L-glutamine + H2O = L-glutamate + NH4(+). Its pathway is cofactor biosynthesis; pyridoxal 5'-phosphate biosynthesis. In terms of biological role, catalyzes the hydrolysis of glutamine to glutamate and ammonia as part of the biosynthesis of pyridoxal 5'-phosphate. The resulting ammonia molecule is channeled to the active site of PdxS. The sequence is that of Pyridoxal 5'-phosphate synthase subunit PdxT from Oceanobacillus iheyensis (strain DSM 14371 / CIP 107618 / JCM 11309 / KCTC 3954 / HTE831).